The chain runs to 475 residues: D-lactate dehydrogenase (475 aa).

One can recognise an FAD-binding PCMH-type domain in the interval 43–222 (YGKARPEVLV…TELTLKVIPA (180 aa)).

The protein belongs to the FAD-binding oxidoreductase/transferase type 4 family. Requires FAD as cofactor. The cofactor is Zn(2+).

It catalyses the reaction (R)-lactate + A = pyruvate + AH2. Catalyzes the dehydrogenation of (R)-lactate (D-lactate) to pyruvate. Active in vitro with the artificial electron acceptor 2,6-dichlorophenolindophenol (DCPIP), but not with NAD, NADP, or cytochrome c. Also displays a very low oxidase activity in vitro on D-lactate and L-lactate with O2 as the electron acceptor, but this activity is most likely not physiological. In Anaerostipes hadrus, this protein is D-lactate dehydrogenase.